A 98-amino-acid chain; its full sequence is NADH-ubiquinone oxidoreductase chain 4L (98 aa).

The next 3 helical transmembrane spans lie at 1–21 (MSLV…GLLM), 25–45 (HLMS…ILST), and 67–87 (AACE…TYGV).

The protein belongs to the complex I subunit 4L family. Core subunit of respiratory chain NADH dehydrogenase (Complex I) which is composed of 45 different subunits.

The protein resides in the mitochondrion inner membrane. It catalyses the reaction a ubiquinone + NADH + 5 H(+)(in) = a ubiquinol + NAD(+) + 4 H(+)(out). Its function is as follows. Core subunit of the mitochondrial membrane respiratory chain NADH dehydrogenase (Complex I) which catalyzes electron transfer from NADH through the respiratory chain, using ubiquinone as an electron acceptor. Part of the enzyme membrane arm which is embedded in the lipid bilayer and involved in proton translocation. This is NADH-ubiquinone oxidoreductase chain 4L (MT-ND4L) from Talpa europaea (European mole).